A 183-amino-acid chain; its full sequence is UPF0134 protein MPN_100 (183 aa).

Belongs to the UPF0134 family.

The chain is UPF0134 protein MPN_100 from Mycoplasma pneumoniae (strain ATCC 29342 / M129 / Subtype 1) (Mycoplasmoides pneumoniae).